Consider the following 85-residue polypeptide: Large ribosomal subunit protein bL27 (85 aa).

The protein belongs to the bacterial ribosomal protein bL27 family.

The sequence is that of Large ribosomal subunit protein bL27 from Azobacteroides pseudotrichonymphae genomovar. CFP2.